The sequence spans 2053 residues: Cell adhesion molecule DSCAML1 (2053 aa).

Positions 1-18 (MWLVTFLLLLDSLHKARP) are cleaved as a signal peptide. 9 consecutive Ig-like C2-type domains span residues 19-119 (EDVG…NIRV), 115-217 (PNIR…ARLS), 226-306 (PTIL…AEAT), 314-402 (PLHV…AIIA), 408-501 (PRIV…ARIN), 506-586 (PSIR…LSIS), 596-685 (PPLI…RQLI), 690-784 (PRFV…MFLT), and 788-885 (PAMI…LTVQ). The Extracellular segment spans residues 19-1591 (EDVGTSLYFV…AQGEGDDVKK (1573 aa)). N-linked (GlcNAc...) asparagine glycans are attached at residues Asn-29 and Asn-79. Disulfide bonds link Cys-47–Cys-103, Cys-146–Cys-198, Cys-247–Cys-294, Cys-336–Cys-386, and Cys-429–Cys-485. N-linked (GlcNAc...) asparagine glycans are attached at residues Asn-368, Asn-471, Asn-513, Asn-556, Asn-666, Asn-710, Asn-749, Asn-796, and Asn-809. Intrachain disulfides connect Cys-526/Cys-575 and Cys-617/Cys-669. A disulfide bond links Cys-711 and Cys-767. Residues Cys-810 and Cys-867 are joined by a disulfide bond. Fibronectin type-III domains follow at residues 887-984 (PPDP…TEEA), 989-1088 (PPMD…TLED), 1093-1189 (PPEN…TKED), and 1193-1288 (PPAG…AGKA). N-linked (GlcNAc...) asparagine glycans are attached at residues Asn-926, Asn-1082, Asn-1144, Asn-1162, Asn-1275, and Asn-1345. Residues 1278–1377 (EKVTIEPAGK…TGGFDTIIVN (100 aa)) form the Ig-like C2-type 10 domain. An intrachain disulfide couples Cys-1311 to Cys-1363. Fibronectin type-III domains lie at 1383-1477 (PPDQ…THGR) and 1478-1578 (EPSF…TIPP). N-linked (GlcNAc...) asparagine glycosylation is found at Asn-1492, Asn-1531, and Asn-1561. The helical transmembrane segment at 1592–1612 (LFTIGCPVILATLGVALLFIV) threads the bilayer. Topologically, residues 1613–2053 (RKKRKEKRLK…GAYSKSYTLV (441 aa)) are cytoplasmic. 4 disordered regions span residues 1715–1741 (PLID…HSTR), 1773–1803 (HGVT…STES), 1840–1862 (SSDQ…STPS), and 1974–2053 (LAMP…YTLV). Residues 1732–1741 (KNVKSAHSTR) are compositionally biased toward basic residues. A compositionally biased stretch (polar residues) spans 1773 to 1789 (HGVTVTESDSYSASLSQ). Pro residues predominate over residues 1977–2009 (PAPPAGTAPPAPGPTPAEPPTAPSAAPPAPSTE). Polar residues predominate over residues 2029 to 2041 (EMSTSGVGRSQKQ).

Homodimer; mediates homophilic interactions to promote cell adhesion. As to expression, detected in heart, liver, pancreas, skeletal muscle, kidney and in brain, in particular in the amygdala, caudate nucleus, corpus callosum, hippocampus, substantia nigra, thalamus and subthalamus.

The protein resides in the cell membrane. The protein localises to the synapse. Its function is as follows. Cell adhesion molecule that plays a role in neuronal self-avoidance. Promotes repulsion between specific neuronal processes of either the same cell or the same subtype of cells. Promotes both isoneuronal self-avoidance for creating an orderly neurite arborization in retinal rod bipolar cells and heteroneuronal self-avoidance to maintain mosaic spacing between AII amacrine cells. Adhesion molecule that promotes lamina-specific synaptic connections in the retina: expressed in specific subsets of interneurons and retinal ganglion cells (RGCs) and promotes synaptic connectivity via homophilic interactions. The protein is Cell adhesion molecule DSCAML1 (DSCAML1) of Homo sapiens (Human).